A 496-amino-acid polypeptide reads, in one-letter code: MGRGVRVLLLLSLLHCAGGSEGRKTWRRRGQQPPPPPRTEAAPAAGQPVESFPLDFTAVEGNMDSFMAQVKSLAQSLYPCSAQQLNEDLRLHLLLNTSVTCNDGSPAGYYLKESRGSRRWLLFLEGGWYCFNRENCDSRYDTMRRLMSSRDWPRTRTGTGILSSQPEENPYWWNANMVFIPYCSSDVWSGASSKSEKNEYAFMGALIIQEVVRELLGRGLSGAKVLLLAGSSAGGTGVLLNVDRVAEQLEKLGYPAIQVRGLADSGWFLDNKQYRHTDCVDTITCAPTEAIRRGIRYWNGVVPERCRRQFQEGEEWNCFFGYKVYPTLRCPVFVVQWLFDEAQLTVDNVHLTGQPVQEGLRLYIQNLGRELRHTLKDVPASFAPACLSHEIIIRSHWTDVQVKGTSLPRALHCWDRSLHDSHKASKTPLKGCPVHLVDSCPWPHCNPSCPTVRDQFTGQEMNVAQFLMHMGFDMQTVAQPQGLEPSELLGMLSNGS.

The N-terminal stretch at 1 to 19 (MGRGVRVLLLLSLLHCAGG) is a signal peptide. The segment at 21–46 (EGRKTWRRRGQQPPPPPRTEAAPAAG) is disordered. At Ser-81 the chain carries Phosphoserine; by FAM20C. N-linked (GlcNAc...) asparagine glycosylation occurs at Asn-96. Residues Ser-232, Asp-340, and His-389 each act as charge relay system in the active site.

This sequence belongs to the pectinacetylesterase family. Notum subfamily. Rarely expressed in adult normal tissues.

The protein localises to the secreted. It carries out the reaction [Wnt protein]-O-(9Z)-hexadecenoyl-L-serine + H2O = [Wnt protein]-L-serine + (9Z)-hexadecenoate + H(+). Its function is as follows. Carboxylesterase that acts as a key negative regulator of the Wnt signaling pathway by specifically mediating depalmitoleoylation of WNT proteins. Serine palmitoleoylation of WNT proteins is required for efficient binding to frizzled receptors. This is Palmitoleoyl-protein carboxylesterase NOTUM from Homo sapiens (Human).